The primary structure comprises 490 residues: Betaine aldehyde dehydrogenase (490 aa).

Residues Thr-26, Ile-27, and Asp-93 each contribute to the K(+) site. 150–152 (GAW) contacts NAD(+). The active-site Charge relay system is Lys-162. An NAD(+)-binding site is contributed by 176–179 (KPSE). Val-180 contributes to the K(+) binding site. Residue 230-233 (GVAS) coordinates NAD(+). Leu-246 is a binding site for K(+). Glu-252 serves as the catalytic Proton acceptor. Gly-254, Cys-286, and Glu-387 together coordinate NAD(+). Cys-286 (nucleophile) is an active-site residue. Cys-286 is modified (cysteine sulfenic acid (-SOH)). The K(+) site is built by Lys-457 and Gly-460. Glu-464 functions as the Charge relay system in the catalytic mechanism.

It belongs to the aldehyde dehydrogenase family. As to quaternary structure, dimer of dimers. The cofactor is K(+).

The enzyme catalyses betaine aldehyde + NAD(+) + H2O = glycine betaine + NADH + 2 H(+). The protein operates within amine and polyamine biosynthesis; betaine biosynthesis via choline pathway; betaine from betaine aldehyde: step 1/1. In terms of biological role, involved in the biosynthesis of the osmoprotectant glycine betaine. Catalyzes the irreversible oxidation of betaine aldehyde to the corresponding acid. The protein is Betaine aldehyde dehydrogenase of Escherichia coli (strain SE11).